The following is a 141-amino-acid chain: MAPKVFRQYWDIPDGTDCHRKAYSTTSIASVAGLTAAAYRVTLNPPGTFLEGVAKVGQYTFTAAAVGAVFGLTTCISAHVREKPDDPLNYFLGGCAGGLTLGARTHNYGIGAAACVYFGIAASLVKMGRLEGWEVFAKPKV.

At Ala-2 the chain carries N-acetylalanine. 2 helical membrane passes run 21 to 43 and 58 to 80; these read KAYS…RVTL and QYTF…SAHV.

Belongs to the complex I NDUFA11 subunit family. As to quaternary structure, complex I is composed of 45 different subunits.

The protein localises to the mitochondrion inner membrane. Functionally, accessory subunit of the mitochondrial membrane respiratory chain NADH dehydrogenase (Complex I), that is believed not to be involved in catalysis. Complex I functions in the transfer of electrons from NADH to the respiratory chain. The immediate electron acceptor for the enzyme is believed to be ubiquinone. The protein is NADH dehydrogenase [ubiquinone] 1 alpha subcomplex subunit 11 (NDUFA11) of Homo sapiens (Human).